Here is a 232-residue protein sequence, read N- to C-terminus: Ribonuclease 3 (232 aa).

One can recognise an RNase III domain in the interval 5-134; that stretch reads QTVLKNHFEI…FLGALLLDKD (130 aa). Position 47 (Glu-47) interacts with Mg(2+). The active site involves Asp-51. Mg(2+)-binding residues include Asp-120 and Glu-123. Glu-123 is an active-site residue. The DRBM domain occupies 160–229; that stretch reads DYKTHLQELL…AKNAVEKGLD (70 aa).

This sequence belongs to the ribonuclease III family. In terms of assembly, homodimer. It depends on Mg(2+) as a cofactor.

It localises to the cytoplasm. It catalyses the reaction Endonucleolytic cleavage to 5'-phosphomonoester.. Functionally, digests double-stranded RNA. Involved in the processing of primary rRNA transcript to yield the immediate precursors to the large and small rRNAs (23S and 16S). Processes some mRNAs, and tRNAs when they are encoded in the rRNA operon. Processes pre-crRNA and tracrRNA of type II CRISPR loci if present in the organism. This is Ribonuclease 3 from Streptococcus pneumoniae (strain ATCC BAA-255 / R6).